Here is a 546-residue protein sequence, read N- to C-terminus: CTP synthase (546 aa).

Residues 1–269 (MNSNTKIIFV…DAKLVELLNL (269 aa)) are amidoligase domain. Ser-16 lines the CTP pocket. A UTP-binding site is contributed by Ser-16. ATP-binding positions include 17-22 (SLGKGV) and Asp-74. Positions 74 and 143 each coordinate Mg(2+). CTP-binding positions include 150-152 (DIE), 190-195 (KTKPTQ), and Lys-226. UTP-binding positions include 190–195 (KTKPTQ) and Lys-226. The region spanning 294–546 (TIAMVGKYVS…IQAAIENSNN (253 aa)) is the Glutamine amidotransferase type-1 domain. Position 356 (Gly-356) interacts with L-glutamine. The active-site Nucleophile; for glutamine hydrolysis is Cys-383. L-glutamine is bound by residues 384 to 387 (LGMQ), Glu-407, and Arg-474. Active-site residues include His-519 and Glu-521.

It belongs to the CTP synthase family. In terms of assembly, homotetramer.

It catalyses the reaction UTP + L-glutamine + ATP + H2O = CTP + L-glutamate + ADP + phosphate + 2 H(+). The catalysed reaction is L-glutamine + H2O = L-glutamate + NH4(+). It carries out the reaction UTP + NH4(+) + ATP = CTP + ADP + phosphate + 2 H(+). It participates in pyrimidine metabolism; CTP biosynthesis via de novo pathway; CTP from UDP: step 2/2. Allosterically activated by GTP, when glutamine is the substrate; GTP has no effect on the reaction when ammonia is the substrate. The allosteric effector GTP functions by stabilizing the protein conformation that binds the tetrahedral intermediate(s) formed during glutamine hydrolysis. Inhibited by the product CTP, via allosteric rather than competitive inhibition. In terms of biological role, catalyzes the ATP-dependent amination of UTP to CTP with either L-glutamine or ammonia as the source of nitrogen. Regulates intracellular CTP levels through interactions with the four ribonucleotide triphosphates. This is CTP synthase from Francisella tularensis subsp. mediasiatica (strain FSC147).